The primary structure comprises 149 residues: Arginine repressor (149 aa).

This sequence belongs to the ArgR family.

The protein resides in the cytoplasm. Its pathway is amino-acid biosynthesis; L-arginine biosynthesis [regulation]. In terms of biological role, regulates arginine biosynthesis genes. This Chlorobium phaeobacteroides (strain DSM 266 / SMG 266 / 2430) protein is Arginine repressor.